The primary structure comprises 736 residues: 3',5'-cyclic-AMP phosphodiesterase 4B (736 aa).

Disordered stretches follow at residues 51–78 (QLPP…TTLP), 189–209 (LHGT…SRVN), and 282–301 (KQND…KKKK). Ser290 carries the post-translational modification Phosphoserine. One can recognise a PDEase domain in the interval 330 to 659 (VNTENEDHLA…NWYQSMIPQS (330 aa)). Residue His406 is the Proton donor of the active site. Residue His406 coordinates 3',5'-cyclic AMP. Residues His406 and His410 each contribute to the AMP site. Residues His410, His446, Asp447, and Asp564 each contribute to the Zn(2+) site. The AMP site is built by Asp447, Asp564, Gln615, and Phe618. Asp447 provides a ligand contact to Mg(2+). Residue Asp447 coordinates Mn(2+). 3',5'-cyclic AMP contacts are provided by Gln615 and Phe618. Phosphoserine occurs at positions 659 and 661. A disordered region spans residues 685 to 736 (DEEDSEGPEKEGEGHSYFSSTKTLCVIDPENRDSLGETDIDIATEDKSPVDT).

Belongs to the cyclic nucleotide phosphodiesterase family. PDE4 subfamily. In terms of assembly, interacts with DISC1. Requires Zn(2+) as cofactor. Mg(2+) serves as cofactor. Mn(2+) is required as a cofactor. In terms of tissue distribution, expressed in brain, heart, lung and skeletal muscle. Expressed in white blood cells. As to expression, brain-specific isoform.

It is found in the cytoplasm. It localises to the cell membrane. The catalysed reaction is 3',5'-cyclic AMP + H2O = AMP + H(+). The protein operates within purine metabolism; 3',5'-cyclic AMP degradation; AMP from 3',5'-cyclic AMP: step 1/1. Its activity is regulated as follows. Inhibited by rolipram. Functionally, hydrolyzes the second messenger cAMP, which is a key regulator of many important physiological processes. May be involved in mediating central nervous system effects of therapeutic agents ranging from antidepressants to antiasthmatic and anti-inflammatory agents. This Homo sapiens (Human) protein is 3',5'-cyclic-AMP phosphodiesterase 4B.